The sequence spans 918 residues: Isoleucine--tRNA ligase 1 (918 aa).

Positions 57–67 match the 'HIGH' region motif; that stretch reads PYANGDIHIGH. Glu553 lines the L-isoleucyl-5'-AMP pocket. The 'KMSKS' region motif lies at 594 to 598; it reads KMSKS. Lys597 is a binding site for ATP. Zn(2+) contacts are provided by Cys885, Cys888, Cys905, and Cys908.

It belongs to the class-I aminoacyl-tRNA synthetase family. IleS type 1 subfamily. As to quaternary structure, monomer. It depends on Zn(2+) as a cofactor.

The protein localises to the cytoplasm. The enzyme catalyses tRNA(Ile) + L-isoleucine + ATP = L-isoleucyl-tRNA(Ile) + AMP + diphosphate. Functionally, catalyzes the attachment of isoleucine to tRNA(Ile). As IleRS can inadvertently accommodate and process structurally similar amino acids such as valine, to avoid such errors it has two additional distinct tRNA(Ile)-dependent editing activities. One activity is designated as 'pretransfer' editing and involves the hydrolysis of activated Val-AMP. The other activity is designated 'posttransfer' editing and involves deacylation of mischarged Val-tRNA(Ile). This Oceanobacillus iheyensis (strain DSM 14371 / CIP 107618 / JCM 11309 / KCTC 3954 / HTE831) protein is Isoleucine--tRNA ligase 1.